The chain runs to 74 residues: Conotoxin AbVIL (74 aa).

The first 17 residues, Val1–Ala17, serve as a signal peptide directing secretion. The disordered stretch occupies residues Ala17 to Lys41. The propeptide occupies Glu18 to Thr40. Over residues Ser21–Ser37 the composition is skewed to basic and acidic residues. 3 disulfide bridges follow: Cys43–Cys57, Cys50–Cys61, and Cys56–Cys68.

The protein belongs to the conotoxin O1 superfamily. As to expression, expressed by the venom duct.

Its subcellular location is the secreted. The polypeptide is Conotoxin AbVIL (Conus abbreviatus (Abbreviated cone)).